The following is a 194-amino-acid chain: MSKQRKSVTFFNNALDESPVETIFPMEKENKNRITPGLTELIETNMNLRRKCKLENCPKWDPNPDRARKVAYIQTLIVTQSSKLFMDEVDSFFNNRYVMSRDPTAQITVGKRMMGLTTMVVSGSLELELRLSKANKCVVCCKSGQPNNICDGCHEDVELVREVIDSLGMNYRNLFVTNDYDENDYESDIESIDV.

This is an uncharacterized protein from Ostreid herpesvirus 1 (isolate France) (OsHV-1).